Reading from the N-terminus, the 1509-residue chain is Dynein axonemal assembly factor 1 homolog (1509 aa).

LRR repeat units lie at residues 34-56, 57-78, 79-100, 101-122, 125-146, and 150-171; these read RLND…EEYT, ELKC…EKLS, KLKC…EPCR, ELDT…GTNI, VLNT…SDLV, and TLSV…KIFE. The region spanning 185 to 223 is the LRRCT domain; it reads PVVSRLPQYRKTLILACKELTYLDSRPVFPRDRACAEAW. Disordered regions lie at residues 252-280, 306-327, 962-1008, and 1103-1122; these read CTIR…DDTC, HPTS…ATSS, SGDL…DSKN, and TLQT…KLRN. A compositionally biased stretch (low complexity) spans 309–318; it reads SESGASTSSS. Positions 978–990 are enriched in acidic residues; that stretch reads SESEDYDTADDEY. Residues 1103-1112 show a composition bias toward polar residues; it reads TLQTSFSTVG.

Belongs to the DNAAF1 family.

The protein resides in the cell projection. The protein localises to the cilium. Cilium-specific protein required for cilia structures. The sequence is that of Dynein axonemal assembly factor 1 homolog (dtr) from Drosophila yakuba (Fruit fly).